The sequence spans 165 residues: Large ribosomal subunit protein uL10 (165 aa).

It belongs to the universal ribosomal protein uL10 family. Part of the ribosomal stalk of the 50S ribosomal subunit. The N-terminus interacts with L11 and the large rRNA to form the base of the stalk. The C-terminus forms an elongated spine to which L12 dimers bind in a sequential fashion forming a multimeric L10(L12)X complex.

In terms of biological role, forms part of the ribosomal stalk, playing a central role in the interaction of the ribosome with GTP-bound translation factors. The polypeptide is Large ribosomal subunit protein uL10 (Edwardsiella ictaluri (strain 93-146)).